The sequence spans 193 residues: ATP-dependent Clp protease proteolytic subunit (193 aa).

Serine 98 functions as the Nucleophile in the catalytic mechanism. Histidine 123 is a catalytic residue.

The protein belongs to the peptidase S14 family. As to quaternary structure, fourteen ClpP subunits assemble into 2 heptameric rings which stack back to back to give a disk-like structure with a central cavity, resembling the structure of eukaryotic proteasomes.

It is found in the cytoplasm. The enzyme catalyses Hydrolysis of proteins to small peptides in the presence of ATP and magnesium. alpha-casein is the usual test substrate. In the absence of ATP, only oligopeptides shorter than five residues are hydrolyzed (such as succinyl-Leu-Tyr-|-NHMec, and Leu-Tyr-Leu-|-Tyr-Trp, in which cleavage of the -Tyr-|-Leu- and -Tyr-|-Trp bonds also occurs).. Cleaves peptides in various proteins in a process that requires ATP hydrolysis. Has a chymotrypsin-like activity. Plays a major role in the degradation of misfolded proteins. The polypeptide is ATP-dependent Clp protease proteolytic subunit (Haemophilus influenzae (strain PittEE)).